The sequence spans 397 residues: Serpin B10 (397 aa).

A disulfide bridge links Cys68 with Cys395. The Nuclear localization signal signature appears at 74-77 (KKRK).

It belongs to the serpin family. Ov-serpin subfamily. Expressed specifically in myeloid cells and the bone marrow.

It is found in the nucleus. Its subcellular location is the cytoplasm. Protease inhibitor that may play a role in the regulation of protease activities during hematopoiesis and apoptosis induced by TNF. May regulate protease activities in the cytoplasm and in the nucleus. This Homo sapiens (Human) protein is Serpin B10 (SERPINB10).